The following is a 146-amino-acid chain: ATP synthase epsilon chain (146 aa).

This sequence belongs to the ATPase epsilon chain family. In terms of assembly, F-type ATPases have 2 components, CF(1) - the catalytic core - and CF(0) - the membrane proton channel. CF(1) has five subunits: alpha(3), beta(3), gamma(1), delta(1), epsilon(1). CF(0) has three main subunits: a, b and c.

The protein resides in the cell membrane. Produces ATP from ADP in the presence of a proton gradient across the membrane. In Lactobacillus delbrueckii subsp. bulgaricus (strain ATCC 11842 / DSM 20081 / BCRC 10696 / JCM 1002 / NBRC 13953 / NCIMB 11778 / NCTC 12712 / WDCM 00102 / Lb 14), this protein is ATP synthase epsilon chain.